We begin with the raw amino-acid sequence, 194 residues long: Segregation and condensation protein B (194 aa).

The protein belongs to the ScpB family. As to quaternary structure, homodimer. Homodimerization may be required to stabilize the binding of ScpA to the Smc head domains. Component of a cohesin-like complex composed of ScpA, ScpB and the Smc homodimer, in which ScpA and ScpB bind to the head domain of Smc. The presence of the three proteins is required for the association of the complex with DNA.

The protein resides in the cytoplasm. Functionally, participates in chromosomal partition during cell division. May act via the formation of a condensin-like complex containing Smc and ScpA that pull DNA away from mid-cell into both cell halves. This Streptococcus agalactiae serotype Ia (strain ATCC 27591 / A909 / CDC SS700) protein is Segregation and condensation protein B.